A 165-amino-acid chain; its full sequence is E3 ubiquitin ligase complex SCF subunit sconC (165 aa).

Positions 106 to 165 (ILAANYLDIKALLDVGCKTVANMIKGKSPEEIRKTFNIQNDFTPEEEDQIRRENEWAEDR) are interaction with the F-box domain of F-box proteins.

The protein belongs to the SKP1 family. In terms of assembly, component of the SCF (SKP1-CUL1-F-box protein) E3 ubiquitin ligase complexes.

It functions in the pathway protein modification; protein ubiquitination. In terms of biological role, essential component of the SCF (SKP1-CUL1-F-box protein) E3 ubiquitin ligase complexes, which mediate the ubiquitination and subsequent proteasomal degradation of target proteins. Controls sulfur metabolite repression, probably by mediating the inactivation or degradation of the metR transcription factor. The polypeptide is E3 ubiquitin ligase complex SCF subunit sconC (sconC) (Arthroderma otae (strain ATCC MYA-4605 / CBS 113480) (Microsporum canis)).